A 97-amino-acid polypeptide reads, in one-letter code: Class II hydrophobin 1 (97 aa).

The first 16 residues, 1–16 (MKFFAIAALFAAAAVA), serve as a signal peptide directing secretion. A propeptide spanning residues 17-22 (QPLEDR) is cleaved from the precursor. 4 disulfides stabilise this stretch: C30–C79, C40–C70, C41–C53, and C80–C91.

Belongs to the cerato-ulmin hydrophobin family. In terms of assembly, homotetramer. Further self-assembles to form highly ordered films at water-air interfaces through intermolecular interactions.

It localises to the secreted. The protein localises to the cell wall. In terms of biological role, aerial growth, conidiation, and dispersal of filamentous fungi in the environment rely upon a capability of their secreting small amphipathic proteins called hydrophobins (HPBs) with low sequence identity. Class I can self-assemble into an outermost layer of rodlet bundles on aerial cell surfaces, conferring cellular hydrophobicity that supports fungal growth, development and dispersal; whereas Class II form highly ordered films at water-air interfaces through intermolecular interactions but contribute nothing to the rodlet structure. Hbf1 is a class II hydrophobin that has a role in hyphal development and is in particular required for the formation of aerial hyphae. The polypeptide is Class II hydrophobin 1 (Hypocrea jecorina (Trichoderma reesei)).